A 76-amino-acid chain; its full sequence is Rhesus theta defensin-1/3 subunit A (76 aa).

An N-terminal signal peptide occupies residues 1–22 (MRTFALLTAMLLLVALHAQAEA). A propeptide spanning residues 23-64 (RQARADEAAAQQQPGTDDQGMAHSFTWPENAALPLSESAKGL) is cleaved from the precursor. The interval 25–45 (ARADEAAAQQQPGTDDQGMAH) is disordered. Arg65 participates in a covalent cross-link: Cyclopeptide (Arg-Cys) (interchain with C-73 in subunit A); in form RTD-3. Arg65 participates in a covalent cross-link: Cyclopeptide (Arg-Cys) (interchain with C-73 in subunit B); in form RTD-1. A disulfide bond links Cys68 and Cys73. Cys73 is covalently cross-linked (Cyclopeptide (Cys-Arg) (interchain with R-65 in subunit A); in form RTD-3). A Cyclopeptide (Cys-Arg) (interchain with R-65 in subunit B); in form RTD-1 cross-link involves residue Cys73. Positions 74–76 (RLL) are excised as a propeptide.

Belongs to the alpha-defensin family. Theta subfamily. RTD-1 is a cyclic heterodimer composed of subunits A and B; disulfide-linked. RTD-3 is a cyclic homodimer composed of two subunits A; disulfide-linked. In terms of processing, forms a cyclic peptide with subunit A (RTD-3) or with subunit B (RTD-1). An additional intersubunit disulfide bond is formed. RTD-1 is expressed in bone marrow. Detected in promyelocytes, myelocytes and mature neutrophils and monocytes.

In terms of biological role, RTD-1 and RTD-3 have similar antimicrobial activities against the Gram-positive bacteria S.aureus 502A and L.monocytogenes, the Gram-negative bacteria S.typhimurium and E.coli ML35, and the fungi C.albicans 16820 and C.neoformans 271A. This Macaca mulatta (Rhesus macaque) protein is Rhesus theta defensin-1/3 subunit A (RTD1A).